Consider the following 358-residue polypeptide: Phosphoserine aminotransferase (358 aa).

Arg-41 provides a ligand contact to L-glutamate. Pyridoxal 5'-phosphate is bound by residues 75–76 (AS), Trp-100, Thr-148, Asp-167, and Gln-190. The residue at position 191 (Lys-191) is an N6-(pyridoxal phosphate)lysine. 233-234 (NT) lines the pyridoxal 5'-phosphate pocket.

It belongs to the class-V pyridoxal-phosphate-dependent aminotransferase family. SerC subfamily. Homodimer. Pyridoxal 5'-phosphate serves as cofactor.

Its subcellular location is the cytoplasm. It catalyses the reaction O-phospho-L-serine + 2-oxoglutarate = 3-phosphooxypyruvate + L-glutamate. The enzyme catalyses 4-(phosphooxy)-L-threonine + 2-oxoglutarate = (R)-3-hydroxy-2-oxo-4-phosphooxybutanoate + L-glutamate. Its pathway is amino-acid biosynthesis; L-serine biosynthesis; L-serine from 3-phospho-D-glycerate: step 2/3. It functions in the pathway cofactor biosynthesis; pyridoxine 5'-phosphate biosynthesis; pyridoxine 5'-phosphate from D-erythrose 4-phosphate: step 3/5. Its function is as follows. Catalyzes the reversible conversion of 3-phosphohydroxypyruvate to phosphoserine and of 3-hydroxy-2-oxo-4-phosphonooxybutanoate to phosphohydroxythreonine. In Campylobacter jejuni subsp. jejuni serotype O:23/36 (strain 81-176), this protein is Phosphoserine aminotransferase.